The sequence spans 144 residues: Maximins 3/H5 (144 aa).

The first 18 residues, 1-18, serve as a signal peptide directing secretion; sequence MNFKYIFAVSFLIASAYA. 2 propeptides span residues 19–43 and 74–123; these read RSVQNDEQSLSQRDVLEEESLREIR and TAEE…KEKR. At Leu143 the chain carries Leucine amide.

The protein belongs to the bombinin family. As to expression, expressed by the skin glands.

The protein resides in the secreted. Functionally, maximin-3 shows antibacterial activity against both Gram-positive and Gram-negative bacteria. It also shows antimicrobial activity against the fungus C.albicans, but not against A.flavus nor P.uticale. It has little hemolytic activity. It possess a significant cytotoxicity against tumor cell lines. It possess a significant anti-HIV activity. It shows high spermicidal activity. In terms of biological role, maximin-H5 shows antibacterial activity only against the Gram-positive bacteria S.aureus. The other bacterial and fungal strains tested were resistant to it. The presence of metal ions, like Zn(2+) and Mg(2+), did not increase its antimicrobial potency. Does not show hemolytic activity (in a concentration up to 80 uM). The sequence is that of Maximins 3/H5 from Bombina maxima (Giant fire-bellied toad).